A 677-amino-acid chain; its full sequence is MTQVAKKILVTCALPYANGSIHLGHMLEHIQADVWVRYQRMRGHEVNFICADDAHGTPIMLKAQQLGITPEQMIGEMSQEHQTDFAGFNISYDNYHSTHSDENRELSELIYTRLKENGFIKNRTISQLYDPEKGMFLPDRFVKGTCPKCKSADQYGDNCEVCGATYSPTELIEPKSVVSGATPVMRDSEHFFFDLPSFSEMLQAWTRSGALQEQVANKMQEWFESGLQQWDISRDAPYFGFEIPNAPGKYFYVWLDAPIGYMGSFKNLCDKRGDTTSFDEYWKKDSDAELYHFIGKDIVYFHSLFWPAMLEGSHFRKPTNLFVHGYVTVNGAKMSKSRGTFIKASTWLKHFDADSLRYYYTAKLSSRIDDIDLNLEDFVQRVNADIVNKVVNLASRNAGFINKRFDGVLAAELADPQLYKTFTDAAAVIGEAWESREFGKAIREIMALADIANRYVDEQAPWVVAKQEGRDADLQAICSMGINLFRVLMTYLKPVLPTLSERVEAFLNSELNWDAIEQPLLGHKVNTFKALYNRIDMKQVEALVEASKEEVKAAAAPVTGPLADFPIQETITFDDFAKIDLRVALIENAEFVDGSDKLLRLTLDLGGEKRNVFSGIRSAYPDPQALIGRQTVMVANLAPRKMRFGVSEGMVMAAGPGGKDIFLLSPDDGAKPGQQVK.

Residues proline 15–histidine 25 carry the 'HIGH' region motif. 4 residues coordinate Zn(2+): cysteine 146, cysteine 149, cysteine 159, and cysteine 162. Residues lysine 333 to serine 337 carry the 'KMSKS' region motif. Lysine 336 contributes to the ATP binding site. Residues aspartate 575–lysine 677 enclose the tRNA-binding domain.

Belongs to the class-I aminoacyl-tRNA synthetase family. MetG type 1 subfamily. As to quaternary structure, homodimer. Zn(2+) serves as cofactor.

It localises to the cytoplasm. The catalysed reaction is tRNA(Met) + L-methionine + ATP = L-methionyl-tRNA(Met) + AMP + diphosphate. Functionally, is required not only for elongation of protein synthesis but also for the initiation of all mRNA translation through initiator tRNA(fMet) aminoacylation. The polypeptide is Methionine--tRNA ligase (Salmonella agona (strain SL483)).